The primary structure comprises 211 residues: Suppressor of cytokine signaling 1 (211 aa).

The disordered stretch occupies residues 1 to 53 (MVAHNQVAADNAVSTAAEPRRRPEPSSSSSSSPAAPARPRPCPAVPAPAPGDT). Residues 25-35 (PSSSSSSSPAA) are compositionally biased toward low complexity. Residues 36 to 49 (PARPRPCPAVPAPA) are compositionally biased toward pro residues. The tract at residues 55–66 (FRTFRSHADYRR) is kinase inhibitory region (KIR). The extended SH2 subdomain (ESS) stretch occupies residues 67–78 (ITRASALLDACG). One can recognise an SH2 domain in the interval 79–174 (FYWGPLSVHG…PLRQRRVRPL (96 aa)). The SOCS box domain occupies 161–210 (MLGAPLRQRRVRPLQELCRQRIVATVGRENLARIPLNPVLRDYLSSFPFQ). The interaction with Elongin BC complex stretch occupies residues 173 to 182 (PLQELCRQRI).

The protein belongs to the SOCS1 family. Interacts with multiple activated signaling proteins of the tyrosine kinase signaling pathway including JAK family kinases, TEC, KIT, GRB2 and VAV. Binding to JAKs is mediated through the KIR and SH2 domains to a phosphorylated tyrosine residue within the JAK JH1 domain. Binds the SH3 domain of GRB2 via diproline determinants in the N-terminus, and the N-terminal regulatory domain of VAV. Interacts with the Elongin BC complex (ELOB and ELOC). Component of an ECS CBC(SOCS1) E3 ubiquitin-protein ligase complex which contains Elongin BC, CUL5, RBX1 and SOCS1. Interacts (via SH2 domain and SOCS box) with TRIM8. Interacts with AXL, CUL2 and FGFR3. Interacts with INSR. Interacts with TRIM8. Interacts with DCUN1D1. Interacts with IFNGR1. Expressed in all tissues with high expression in spleen, small intestine and peripheral blood leukocytes.

The protein resides in the nucleus. The protein localises to the cytoplasmic vesicle. It participates in protein modification; protein ubiquitination. In terms of biological role, essential negative regulator of type I and type II interferon (IFN) signaling, as well as that of other cytokines, including IL2, IL4, IL6 and leukemia inhibitory factor (LIF). Downregulates cytokine signaling by inhibiting the JAK/STAT signaling pathway. Acts by binding to JAK proteins and to IFNGR1 and inhibiting their kinase activity. In vitro, suppresses Tec protein-tyrosine activity. Regulates IFN-gamma (IFNG)-mediated sensory neuron survival. Probable substrate recognition component of an ECS (Elongin BC-CUL2/5-SOCS-box protein) E3 ubiquitin ligase complex which mediates the ubiquitination and subsequent proteasomal degradation of target proteins. The protein is Suppressor of cytokine signaling 1 (SOCS1) of Homo sapiens (Human).